The chain runs to 386 residues: Succinyl-diaminopimelate desuccinylase (386 aa).

A Zn(2+)-binding site is contributed by His-77. The active site involves Asp-79. Asp-110 lines the Zn(2+) pocket. Glu-144 functions as the Proton acceptor in the catalytic mechanism. Positions 145, 173, and 359 each coordinate Zn(2+).

The protein belongs to the peptidase M20A family. DapE subfamily. Homodimer. It depends on Zn(2+) as a cofactor. The cofactor is Co(2+).

The enzyme catalyses N-succinyl-(2S,6S)-2,6-diaminopimelate + H2O = (2S,6S)-2,6-diaminopimelate + succinate. It functions in the pathway amino-acid biosynthesis; L-lysine biosynthesis via DAP pathway; LL-2,6-diaminopimelate from (S)-tetrahydrodipicolinate (succinylase route): step 3/3. Functionally, catalyzes the hydrolysis of N-succinyl-L,L-diaminopimelic acid (SDAP), forming succinate and LL-2,6-diaminopimelate (DAP), an intermediate involved in the bacterial biosynthesis of lysine and meso-diaminopimelic acid, an essential component of bacterial cell walls. The sequence is that of Succinyl-diaminopimelate desuccinylase from Methylibium petroleiphilum (strain ATCC BAA-1232 / LMG 22953 / PM1).